Here is a 1080-residue protein sequence, read N- to C-terminus: Adenylate cyclase type 7 (1080 aa).

The Cytoplasmic portion of the chain corresponds to 1–33 (MPAKGRYFLNEGEEGPDQDALYEKYQLTSQHGP). Helical transmembrane passes span 34 to 54 (LLLTLLLVAATACVALIIIAF), 63 to 83 (QAILGMAFLVLAVFAALSVLM), 95 to 117 (ALALLTWACLVALGYVLVFDAWT), 122 to 142 (AWEQVPFFLFIVFVVYTLLPF), 147 to 167 (AVAVGAVSTASHLLVLGSLMG), and 176 to 196 (VGLQLLANAVIFLCGNLTGAF). At 197-594 (HKHQMQDASR…YRLAPIPRAR (398 aa)) the chain is on the cytoplasmic side. Residues 279-406 (SILYADIVGF…HDVSLANRME (128 aa)) enclose the Guanylate cyclase 1 domain. The Mg(2+) site is built by Asp-284, Ile-285, and Asp-328. Residues 284-289 (DIVGFT), 326-328 (LGD), and Arg-372 contribute to the ATP site. The segment at 454–474 (DPRSQQPPPPSQHLPRPKGDA) is disordered. Residues 477 to 482 (KMRASV) form a mediates regulation of adenylate cyclase activity by C5 alpha-induced G- beta and gamma pathway region. Residues 491–499 (WGAARPFAH) form a mediates regulation of adenylate cyclase activity by sphingosine 1-phosphate-induced G alpha 13 pathway region. Residues 504-546 (ESVSSGETHVPNGRRPKSVPQRHRRTPDRSMSPKGRSEDDSYD) are disordered. The tract at residues 506–584 (VSSGETHVPN…IFLEKGFERE (79 aa)) is modulates adenylate cyclase activity by modulating the binding of G(s)alpha to the high-affinity G(s)alpha binding site in 7C1a/7C2. Residues 515–529 (NGRRPKSVPQRHRRT) are compositionally biased toward basic residues. The next 3 helical transmembrane spans lie at 595–615 (HDFACASLIFVCILLVHVLLM), 620–640 (ALGVSFGLVACVLGLVLGLCF), and 669–688 (LTLAVLTIGSLLTVAIINLP). Asn-701 is a glycosylation site (N-linked (GlcNAc...) asparagine). The next 2 helical transmembrane spans lie at 718 to 737 (PLPYYTCSCVLGFIACSVFL) and 746 to 773 (VLLTVALVAYLVLFNLSPCWQWDCCGQG). Residues Asn-776 and Asn-781 are each glycosylated (N-linked (GlcNAc...) asparagine). The chain crosses the membrane as a helical span at residues 794 to 814 (DLKTMTNFYLVLFYITLLTLS). Residues 815 to 1080 (RQIDYYCRLD…TAKFQGLGLN (266 aa)) are Cytoplasmic-facing. A Guanylate cyclase 2 domain is found at 879 to 1023 (CVMFASVPDF…NTVNVASRME (145 aa)). Residues Lys-931, 1010-1012 (DIW), 1017-1021 (NVASR), and Lys-1057 contribute to the ATP site.

The protein belongs to the adenylyl cyclase class-4/guanylyl cyclase family. Requires Mg(2+) as cofactor. It depends on Mn(2+) as a cofactor. In terms of processing, phosphorylated by PRKCD.

It localises to the membrane. It carries out the reaction ATP = 3',5'-cyclic AMP + diphosphate. Activated by the G protein alpha subunit. Activated by the G protein beta and gamma subunit complex. Activated by GNA13 and GNA12. Ethanol and phorbol 12,13-dibutanoate significantly potentiate adenylate cyclase activity generated in response to the activation of the prostanoid receptor by the agonist prostaglandin E1(1-) in a PKC-dependent manner. Inhibited by lithium. Its function is as follows. Catalyzes the formation of cAMP in response to activation of G protein-coupled receptors. Functions in signaling cascades activated namely by thrombin and sphingosine 1-phosphate and mediates regulation of cAMP synthesis through synergistic action of the stimulatory G alpha protein with GNA13. Also, during inflammation, mediates zymosan-induced increase intracellular cAMP, leading to protein kinase A pathway activation in order to modulate innate immune responses through heterotrimeric G proteins G(12/13). Functions in signaling cascades activated namely by dopamine and C5 alpha chain and mediates regulation of cAMP synthesis through synergistic action of the stimulatory G protein with G beta:gamma complex. Functions, through cAMP response regulation, to keep inflammation under control during bacterial infection by sensing the presence of serum factors, such as the bioactive lysophospholipid (LPA) that regulate LPS-induced TNF-alpha production. However, it is also required for the optimal functions of B and T cells during adaptive immune responses by regulating cAMP synthesis in both B and T cells. The protein is Adenylate cyclase type 7 of Homo sapiens (Human).